The primary structure comprises 93 residues: Probable Fe(2+)-trafficking protein (93 aa).

The protein belongs to the Fe(2+)-trafficking protein family.

Its function is as follows. Could be a mediator in iron transactions between iron acquisition and iron-requiring processes, such as synthesis and/or repair of Fe-S clusters in biosynthetic enzymes. In Acidithiobacillus ferrooxidans (strain ATCC 23270 / DSM 14882 / CIP 104768 / NCIMB 8455) (Ferrobacillus ferrooxidans (strain ATCC 23270)), this protein is Probable Fe(2+)-trafficking protein.